A 328-amino-acid chain; its full sequence is Dolichyl-diphosphooligosaccharide--protein glycosyltransferase subunit MAGT1 (328 aa).

The signal sequence occupies residues 1 to 22 (MAALPVLVLVLLLACGGPRAAG). Over 23–177 (QKRKEMVLSE…DVNIRVIRPP (155 aa)) the chain is Extracellular. One can recognise a Thioredoxin domain in the interval 40 to 168 (WTSKRSVIRM…LARWVADRTD (129 aa)). Residue asparagine 64 is glycosylated (N-linked (GlcNAc...) asparagine). Cysteines 80 and 83 form a disulfide. Residues 178–198 (NYAGPLMLGLLLAVIGGLVYL) traverse the membrane as a helical segment. Topologically, residues 199–211 (RGSNLDFLYNKTG) are cytoplasmic. Residues 212–232 (WAFAALCFVLAMTSGQMWNHI) form a helical membrane-spanning segment. Topologically, residues 233–257 (RGPPYAHKNPHTGQVNYIHGSSQAQ) are extracellular. Residues 258–278 (FVAETHIVLLFNGGVTLGMVL) traverse the membrane as a helical segment. Residues 279–293 (LHEAATSDMDVGKRK) are Cytoplasmic-facing. The helical transmembrane segment at 294–314 (IMCIAGIGLVVFFFSWLLSVF) threads the bilayer. Residues 315 to 328 (RSKYHGYPYSFLMS) lie on the Extracellular side of the membrane.

Belongs to the OST3/OST6 family. Accessory component of the STT3B-containing form of the oligosaccharyltransferase (OST) complex. OST exists in two different complex forms which contain common core subunits RPN1, RPN2, OST48, OST4, DAD1 and TMEM258, either STT3A or STT3B as catalytic subunits, and form-specific accessory subunits. OST can form stable complexes with the Sec61 complex or with both the Sec61 and TRAP complexes.

Its subcellular location is the cell membrane. The protein resides in the endoplasmic reticulum. It localises to the endoplasmic reticulum membrane. Its pathway is protein modification; protein glycosylation. Functionally, accessory component of the STT3B-containing form of the N-oligosaccharyl transferase (OST) complex which catalyzes the transfer of a high mannose oligosaccharide from a lipid-linked oligosaccharide donor to an asparagine residue within an Asn-X-Ser/Thr consensus motif in nascent polypeptide chains. Involved in N-glycosylation of STT3B-dependent substrates. Specifically required for the glycosylation of a subset of acceptor sites that are near cysteine residues; in this function seems to act redundantly with TUSC3. In its oxidized form proposed to form transient mixed disulfides with a glycoprotein substrate to facilitate access of STT3B to the unmodified acceptor site. Also has oxidoreductase-independent functions in the STT3B-containing OST complex possibly involving substrate recognition. Could indirectly play a role in Mg(2+) transport in epithelial cells. The polypeptide is Dolichyl-diphosphooligosaccharide--protein glycosyltransferase subunit MAGT1 (Gallus gallus (Chicken)).